Consider the following 302-residue polypeptide: Nucleotide-binding protein Bcep18194_A6125 (302 aa).

8 to 15 (GISGSGKS) is an ATP binding site. 57–60 (DARS) lines the GTP pocket.

The protein belongs to the RapZ-like family.

Displays ATPase and GTPase activities. This Burkholderia lata (strain ATCC 17760 / DSM 23089 / LMG 22485 / NCIMB 9086 / R18194 / 383) protein is Nucleotide-binding protein Bcep18194_A6125.